A 206-amino-acid chain; its full sequence is Holliday junction branch migration complex subunit RuvA (206 aa).

The segment at 1-64 is domain I; the sequence is MIGKLKGTVD…EDQIRLFGFV (64 aa). The interval 65–143 is domain II; the sequence is TEAEREWFRL…AFTAADPGLA (79 aa). The tract at residues 144–154 is flexible linker; it reads RLAADVEATEA. The tract at residues 154 to 206 is domain III; it reads AAGGALADAVSALVNLGYGQAQAHTAIAAAGRKAGEDATTETLIRLGLKELAK.

Belongs to the RuvA family. Homotetramer. Forms an RuvA(8)-RuvB(12)-Holliday junction (HJ) complex. HJ DNA is sandwiched between 2 RuvA tetramers; dsDNA enters through RuvA and exits via RuvB. An RuvB hexamer assembles on each DNA strand where it exits the tetramer. Each RuvB hexamer is contacted by two RuvA subunits (via domain III) on 2 adjacent RuvB subunits; this complex drives branch migration. In the full resolvosome a probable DNA-RuvA(4)-RuvB(12)-RuvC(2) complex forms which resolves the HJ.

The protein localises to the cytoplasm. Functionally, the RuvA-RuvB-RuvC complex processes Holliday junction (HJ) DNA during genetic recombination and DNA repair, while the RuvA-RuvB complex plays an important role in the rescue of blocked DNA replication forks via replication fork reversal (RFR). RuvA specifically binds to HJ cruciform DNA, conferring on it an open structure. The RuvB hexamer acts as an ATP-dependent pump, pulling dsDNA into and through the RuvAB complex. HJ branch migration allows RuvC to scan DNA until it finds its consensus sequence, where it cleaves and resolves the cruciform DNA. This Azorhizobium caulinodans (strain ATCC 43989 / DSM 5975 / JCM 20966 / LMG 6465 / NBRC 14845 / NCIMB 13405 / ORS 571) protein is Holliday junction branch migration complex subunit RuvA.